Here is a 1529-residue protein sequence, read N- to C-terminus: Protein STU1 (1529 aa).

4 disordered regions span residues serine 266 to isoleucine 314, lysine 617 to alanine 638, lysine 651 to isoleucine 745, and serine 1070 to isoleucine 1090. The segment covering threonine 273 to serine 290 has biased composition (low complexity). Polar residues-rich tracts occupy residues arginine 295–serine 308 and arginine 619–threonine 634. Residues threonine 660–serine 674 are compositionally biased toward low complexity. Polar residues predominate over residues threonine 708–alanine 723.

Belongs to the CLASP family. In terms of assembly, interacts with microtubules.

Its subcellular location is the cytoplasm. The protein resides in the cytoskeleton. The protein localises to the nucleus. It is found in the spindle. Microtubule binding protein that promotes the stabilization of dynamic microtubules. Required for mitotic spindle formation. The protein is Protein STU1 (STU1) of Debaryomyces hansenii (strain ATCC 36239 / CBS 767 / BCRC 21394 / JCM 1990 / NBRC 0083 / IGC 2968) (Yeast).